The following is a 502-amino-acid chain: Mannitol 2-dehydrogenase (502 aa).

37-48 (IVHIGVGGFHRA) is a binding site for NAD(+).

The protein belongs to the mannitol dehydrogenase family. As to quaternary structure, monomer.

It carries out the reaction D-mannitol + NAD(+) = D-fructose + NADH + H(+). In terms of biological role, catalyzes the NAD(H)-dependent interconversion of D-fructose and D-mannitol in the mannitol metabolic pathway. The sequence is that of Mannitol 2-dehydrogenase from Aspergillus clavatus (strain ATCC 1007 / CBS 513.65 / DSM 816 / NCTC 3887 / NRRL 1 / QM 1276 / 107).